Here is a 453-residue protein sequence, read N- to C-terminus: Protein vestigial (453 aa).

The tract at residues 145 to 279 (AAGHSLHSSH…GGGLAGSGQG (135 aa)) is disordered. Residues 151–177 (HSSHRTHAHSLAHAHTHPHSHTHTHTH) show a composition bias toward basic residues. Residues 178–193 (QTKEEDLIVPRSEAEA) are compositionally biased toward basic and acidic residues. Composition is skewed to gly residues over residues 227–253 (HGGG…GGTG) and 267–278 (GSGGGGLAGSGQ). The ser-rich sd binding domain stretch occupies residues 279–335 (GQAQYLSASCVVFTNYSGDTASQVDEHFSRALNYNNKDSKESSSPMSNRNFPPSFWN).

The Ser-rich protein domain within the C-terminal region interacts with the C-terminus of sd to form a complex which acts as a selector for wing development. Interacts with Dhfr. Expressed in the developing wing primordia initially along the D/V wing boundary, and by the late third larval instar, maximal expression is seen in cells at the D/V wing disk boundary. Less expression is seen in cells located farther from this boundary.

Its subcellular location is the nucleus. Functionally, involved in determining which thoracic imaginal disk cells will form wings and halteres, perhaps by interacting with other nuclear regulatory proteins. When in combination with scalloped (sd), it acts as a transcriptional activation complex that regulates gene expression in the wing. Binding to sd switches the DNA target selectivity of sd. Required and sufficient for cell proliferation at the dorsal/ventral (D/V) boundary of the wing imaginal disk. Also required for cell proliferation in the wing imaginal disk, mediated via activation of E2f. By interacting with Dhfr, may control genes involved in DNA replication. The chain is Protein vestigial (vg) from Drosophila melanogaster (Fruit fly).